The primary structure comprises 193 residues: Thymidine kinase (193 aa).

ATP is bound by residues 9 to 16 and 87 to 90; these read STMNAGKS and DEAQ. E88 serves as the catalytic Proton acceptor. C145, C147, C182, and H185 together coordinate Zn(2+).

This sequence belongs to the thymidine kinase family. Homotetramer.

It localises to the cytoplasm. The enzyme catalyses thymidine + ATP = dTMP + ADP + H(+). In Haemophilus influenzae (strain 86-028NP), this protein is Thymidine kinase.